Consider the following 155-residue polypeptide: Protein-export protein SecB (155 aa).

It belongs to the SecB family. As to quaternary structure, homotetramer, a dimer of dimers. One homotetramer interacts with 1 SecA dimer.

The protein resides in the cytoplasm. Functionally, one of the proteins required for the normal export of preproteins out of the cell cytoplasm. It is a molecular chaperone that binds to a subset of precursor proteins, maintaining them in a translocation-competent state. It also specifically binds to its receptor SecA. The chain is Protein-export protein SecB from Cronobacter sakazakii (strain ATCC BAA-894) (Enterobacter sakazakii).